Reading from the N-terminus, the 332-residue chain is 6-phosphogluconolactonase (332 aa).

This sequence belongs to the cycloisomerase 2 family.

It carries out the reaction 6-phospho-D-glucono-1,5-lactone + H2O = 6-phospho-D-gluconate + H(+). Its pathway is carbohydrate degradation; pentose phosphate pathway; D-ribulose 5-phosphate from D-glucose 6-phosphate (oxidative stage): step 2/3. Functionally, catalyzes the hydrolysis of 6-phosphogluconolactone to 6-phosphogluconate. This is 6-phosphogluconolactonase from Pectobacterium carotovorum subsp. carotovorum (strain PC1).